We begin with the raw amino-acid sequence, 70 residues long: Myotoxin (70 aa).

Residues Met-1 to Ala-22 form the signal peptide. 3 disulfide bridges follow: Cys-26–Cys-58, Cys-33–Cys-52, and Cys-40–Cys-59.

It belongs to the crotamine-myotoxin family. In terms of assembly, monomer. As to expression, expressed by the venom gland.

It localises to the secreted. Its function is as follows. Cationic peptide that possesses multiple functions. It acts as a cell-penetrating peptide (CPP), and as a potent voltage-gated potassium channel (Kv) inhibitor. It exhibits antimicrobial activities, hind limb paralysis, and severe muscle necrosis by a non-enzymatic mechanism. This Crotalus helleri (Southern pacific rattlesnake) protein is Myotoxin.